The primary structure comprises 208 residues: Uracil phosphoribosyltransferase (208 aa).

5-phospho-alpha-D-ribose 1-diphosphate is bound by residues R78, R103, and 130–138; that span reads DPMLATGGS. Residues I193 and 198–200 contribute to the uracil site; that span reads GDA. D199 contributes to the 5-phospho-alpha-D-ribose 1-diphosphate binding site.

It belongs to the UPRTase family. Mg(2+) is required as a cofactor.

The catalysed reaction is UMP + diphosphate = 5-phospho-alpha-D-ribose 1-diphosphate + uracil. Its pathway is pyrimidine metabolism; UMP biosynthesis via salvage pathway; UMP from uracil: step 1/1. Allosterically activated by GTP. Its function is as follows. Catalyzes the conversion of uracil and 5-phospho-alpha-D-ribose 1-diphosphate (PRPP) to UMP and diphosphate. This chain is Uracil phosphoribosyltransferase, found in Citrobacter koseri (strain ATCC BAA-895 / CDC 4225-83 / SGSC4696).